The following is a 140-amino-acid chain: Nucleoside diphosphate kinase (140 aa).

Positions 9, 57, 85, 91, 102, and 112 each coordinate ATP. Catalysis depends on His115, which acts as the Pros-phosphohistidine intermediate.

Belongs to the NDK family. Homotetramer. The cofactor is Mg(2+).

The protein localises to the cytoplasm. It catalyses the reaction a 2'-deoxyribonucleoside 5'-diphosphate + ATP = a 2'-deoxyribonucleoside 5'-triphosphate + ADP. The catalysed reaction is a ribonucleoside 5'-diphosphate + ATP = a ribonucleoside 5'-triphosphate + ADP. Its function is as follows. Major role in the synthesis of nucleoside triphosphates other than ATP. The ATP gamma phosphate is transferred to the NDP beta phosphate via a ping-pong mechanism, using a phosphorylated active-site intermediate. The sequence is that of Nucleoside diphosphate kinase from Chlorobium chlorochromatii (strain CaD3).